An 892-amino-acid chain; its full sequence is Polyribonucleotide nucleotidyltransferase (892 aa).

Positions 407–427 are disordered; the sequence is YMHNYEMPPYSTGETGRVGSP. Aspartate 521 and aspartate 527 together coordinate Mg(2+). A KH domain is found at 587 to 646; the sequence is PRIITTTVPVDKIGEVIGPKGKMINQIQEDTGAEIAIEDDGTVYISSEGGEAAEKAKEII. The S1 motif domain maps to 658-730; sequence GETYNGKVVK…DRGKISLAIP (73 aa). Residues 727–892 form a disordered region; that stretch reads LAIPGFEDQE…VRRDFDPFED (166 aa). Basic and acidic residues-rich tracts occupy residues 739-844 and 851-877; these read APRR…DRRS and RRDD…ERSE.

This sequence belongs to the polyribonucleotide nucleotidyltransferase family. Mg(2+) serves as cofactor.

It is found in the cytoplasm. It carries out the reaction RNA(n+1) + phosphate = RNA(n) + a ribonucleoside 5'-diphosphate. Functionally, involved in mRNA degradation. Catalyzes the phosphorolysis of single-stranded polyribonucleotides processively in the 3'- to 5'-direction. The sequence is that of Polyribonucleotide nucleotidyltransferase from Bifidobacterium adolescentis (strain ATCC 15703 / DSM 20083 / NCTC 11814 / E194a).